The sequence spans 428 residues: L-rhamnonate dehydratase (428 aa).

Substrate contacts are provided by His-56 and Arg-82. Residues Asp-249, Glu-275, and Glu-303 each contribute to the Mg(2+) site. His-352 (proton acceptor) is an active-site residue. Glu-372 is a binding site for substrate.

This sequence belongs to the mandelate racemase/muconate lactonizing enzyme family. RhamD subfamily. Homooctamer; tetramer of dimers. Mg(2+) serves as cofactor.

The catalysed reaction is L-rhamnonate = 2-dehydro-3-deoxy-L-rhamnonate + H2O. In terms of biological role, catalyzes the dehydration of L-rhamnonate to 2-keto-3-deoxy-L-rhamnonate (KDR). The protein is L-rhamnonate dehydratase of Shigella sonnei (strain Ss046).